Consider the following 188-residue polypeptide: Aspartic protease inhibitor 11 (188 aa).

N19 carries N-linked (GlcNAc...) asparagine glycosylation. 3 disulfides stabilise this stretch: C48-C93, C142-C159, and C150-C153.

The protein belongs to the protease inhibitor I3 (leguminous Kunitz-type inhibitor) family.

The protein localises to the vacuole. In terms of biological role, inhibitor of cathepsin D (aspartic protease) and trypsin (serine protease). May protect the plant by inhibiting proteases of invading organisms. The chain is Aspartic protease inhibitor 11 from Solanum tuberosum (Potato).